A 414-amino-acid polypeptide reads, in one-letter code: Tetraspanning orphan receptor (414 aa).

Residues 1-28 (MPRASALLTSDPRHQFTCCLCLHVRTGT) are Cytoplasmic-facing. The chain crosses the membrane as a helical span at residues 29–49 (IIFGITQIIIQLIFISFLFLM). Residues 50-166 (TFNPRLFPED…EIKIRQFSPY (117 aa)) lie on the Extracellular side of the membrane. A helical transmembrane segment spans residues 167–187 (IAVCVTTFSLAFCCFMVHGAI). Topologically, residues 188 to 194 (TRQPTHL) are cytoplasmic. The helical transmembrane segment at 195-215 (LPFFFIQVFDLIICLIHILGF) threads the bilayer. Topologically, residues 216 to 241 (MSSTSDIRLMIHTKTGPIYIKSTGLA) are extracellular. A helical membrane pass occupies residues 242–262 (FIILSISCMMLAFKAYCLGMV). The Cytoplasmic segment spans residues 263 to 414 (WDCYKYLMLN…TSTPSNVHPC (152 aa)). The interval 306 to 328 (LTGNLDSANESNTRAHPDPVTYD) is disordered.

In terms of assembly, interacts (via N-terminal extracellular domain) with human C2a. Phosphorylated on tyrosine residues.

The protein localises to the cell membrane. Cell surface receptor that binds to human complement C2a protein. This results in inhibition of the classical and lectin pathways of complement activation, probably due to interference with binding of C2a to C4b and interference with cleavage by C1 or MASP2 such that C3 convertase cannot be formed. This infers resistance to complement-mediated cell lysis, allowing parasite survival and infection. This is Tetraspanning orphan receptor from Schistosoma japonicum (Blood fluke).